A 2139-amino-acid polypeptide reads, in one-letter code: Voltage-dependent L-type calcium channel subunit alpha-1C (2139 aa).

Residues methionine 1–tyrosine 20 are disordered. Over methionine 1–lysine 124 the chain is Cytoplasmic. A calmodulin-binding region spans residues glycine 47–alanine 68. A disordered region spans residues isoleucine 73–threonine 98. A compositionally biased stretch (basic residues) spans glutamine 80–lysine 91. The I repeat unit spans residues asparagine 111–phenylalanine 408. Residues proline 125–isoleucine 143 form a helical membrane-spanning segment. Over tyrosine 144 to asparagine 158 the chain is Extracellular. An N-linked (GlcNAc...) asparagine glycan is attached at asparagine 153. The chain crosses the membrane as a helical span at residues leucine 159–isoleucine 179. The Cytoplasmic portion of the chain corresponds to alanine 180 to asparagine 188. Residues alanine 189 to serine 209 form a helical membrane-spanning segment. Residues alanine 210–aspartate 232 lie on the Extracellular side of the membrane. The helical transmembrane segment at valine 233–valine 251 threads the bilayer. At proline 252 to leucine 268 the chain is on the cytoplasmic side. The chain crosses the membrane as a helical span at residues leucine 269–phenylalanine 290. Topologically, residues methionine 291 to alanine 350 are extracellular. 2 disulfide bridges follow: cysteine 298–cysteine 326 and cysteine 316–cysteine 332. Asparagine 328 carries N-linked (GlcNAc...) asparagine glycosylation. The pore-forming intramembrane region spans phenylalanine 351 to methionine 372. The Selectivity filter of repeat I motif lies at threonine 361 to glycine 364. Glutamate 363 is a binding site for Ca(2+). The Extracellular portion of the chain corresponds to glutamine 373–leucine 380. A helical transmembrane segment spans residues proline 381–leucine 401. The Cytoplasmic segment spans residues glycine 402–asparagine 524. Residues glutamine 428–glutamate 445 are AID/alpha-interaction domain; mediates interaction with the beta subunit. Positions proline 449–glycine 481 are disordered. The span at serine 465–asparagine 478 shows a compositional bias: polar residues. Position 469 is a phosphoserine (serine 469). Threonine 476 is modified (phosphothreonine). One copy of the II repeat lies at asparagine 510–leucine 756. A helical membrane pass occupies residues valine 525 to serine 543. The Extracellular portion of the chain corresponds to glutamate 544–glutamate 554. Residues valine 555 to methionine 575 traverse the membrane as a helical segment. The Cytoplasmic segment spans residues tyrosine 576–serine 586. Residues leucine 587–valine 606 form a helical membrane-spanning segment. Over glutamate 607–glycine 615 the chain is Extracellular. The helical transmembrane segment at isoleucine 616–tryptophan 634 threads the bilayer. The Cytoplasmic segment spans residues asparagine 635–serine 653. The chain crosses the membrane as a helical span at residues leucine 654–phenylalanine 673. Residues glycine 674–proline 693 are Extracellular-facing. The pore-forming intramembrane region spans glutamine 694–glycine 715. The Selectivity filter of repeat II motif lies at threonine 704–aspartate 707. Residue glutamate 706 participates in Ca(2+) binding. The Extracellular segment spans residues isoleucine 716–proline 725. A helical membrane pass occupies residues glycine 726 to leucine 745. Over asparagine 746 to threonine 900 the chain is Cytoplasmic. Positions serine 764–proline 861 are disordered. Residues serine 783 to leucine 806 show a composition bias toward basic and acidic residues. A phosphoserine mark is found at serine 808 and serine 815. The interval serine 829–glutamate 876 is interaction with STAC2. Positions alanine 843–glutamate 852 are enriched in acidic residues. Residues asparagine 887–phenylalanine 1169 form an III repeat. The helical transmembrane segment at isoleucine 901–alanine 919 threads the bilayer. The Extracellular segment spans residues glutamate 920 to histidine 931. Residues isoleucine 932–lysine 951 form a helical membrane-spanning segment. Residues methionine 952–asparagine 967 are Cytoplasmic-facing. Residues tyrosine 968–isoleucine 986 form a helical membrane-spanning segment. Over glutamine 987–valine 993 the chain is Extracellular. Residues valine 994 to alanine 1012 traverse the membrane as a helical segment. Residues lysine 1013–asparagine 1031 are Cytoplasmic-facing. A helical transmembrane segment spans residues isoleucine 1032–phenylalanine 1051. Topologically, residues lysine 1052–valine 1101 are extracellular. A disulfide bridge connects residues cysteine 1058 and cysteine 1069. Residues arginine 1089–lysine 1178 are dihydropyridine binding. Positions leucine 1102–tyrosine 1122 form an intramembrane region, pore-forming. The Selectivity filter of repeat III motif lies at threonine 1113 to glycine 1116. Glutamate 1115 is a Ca(2+) binding site. Over arginine 1123–arginine 1139 the chain is Extracellular. The helical transmembrane segment at valine 1140–phenylalanine 1161 threads the bilayer. The Cytoplasmic portion of the chain corresponds to valine 1162–threonine 1219. The IV repeat unit spans residues asparagine 1206–phenylalanine 1479. Residues tyrosine 1220 to tyrosine 1241 form a helical membrane-spanning segment. Over glycine 1242 to isoleucine 1249 the chain is Extracellular. The helical transmembrane segment at alanine 1250 to isoleucine 1271 threads the bilayer. Residues alanine 1272–aspartate 1281 lie on the Cytoplasmic side of the membrane. Residues proline 1282–serine 1301 traverse the membrane as a helical segment. Topologically, residues glutamate 1302–serine 1324 are extracellular. The chain crosses the membrane as a helical span at residues isoleucine 1325–glycine 1343. At glutamate 1344–proline 1361 the chain is on the cytoplasmic side. A helical transmembrane segment spans residues tyrosine 1362–phenylalanine 1382. At glycine 1383–glutamine 1404 the chain is on the extracellular side. Asparagine 1388 carries an N-linked (GlcNAc...) asparagine glycan. Residues alanine 1405–leucine 1423 constitute an intramembrane region (pore-forming). The Selectivity filter of repeat IV signature appears at threonine 1414–alanine 1417. Over alanine 1424–phenylalanine 1451 the chain is Extracellular. Residues lysine 1430–lysine 1498 form a dihydropyridine binding region. The cysteines at positions 1431 and 1447 are disulfide-linked. A glycan (N-linked (GlcNAc...) asparagine) is linked at asparagine 1439. A phenylalkylamine binding region spans residues glutamate 1444–tryptophan 1486. Residues alanine 1452 to methionine 1476 form a helical membrane-spanning segment. Residues aspartate 1477–leucine 2139 are Cytoplasmic-facing. The segment at aspartate 1611–glycine 1638 is important for interaction with STAC1, STAC2 and STAC3. Residues aspartate 1611–serine 1644 are calmodulin-binding. The interval lysine 1617–glutamine 1637 is calmodulin-binding IQ region. The tract at residues leucine 1651 to serine 1670 is important for localization in at the junctional membrane. A phosphoserine mark is found at serine 1670 and serine 1691. 2 stretches are compositionally biased toward polar residues: residues lysine 1732 to glutamate 1741 and serine 1751 to serine 1763. Positions lysine 1732–threonine 1773 are disordered. Residues asparagine 1764–threonine 1773 are compositionally biased toward low complexity. Serine 1897 is modified (phosphoserine; by PKA). The segment at arginine 1940–arginine 1966 is disordered. Residues phenylalanine 1947–threonine 1957 are compositionally biased toward pro residues.

This sequence belongs to the calcium channel alpha-1 subunit (TC 1.A.1.11) family. CACNA1C subfamily. As to quaternary structure, component of a calcium channel complex consisting of a pore-forming alpha subunit (CACNA1C) and ancillary beta, gamma and delta subunits. The channel complex contains alpha, beta, gamma and delta subunits in a 1:1:1:1 ratio, i.e. it contains only one of each type of subunit. CACNA1C channel activity is modulated by ancillary subunits, such as CACNB1, CACNB2, CACNB3, CACNA2D1 and CACNA2D4. Interacts with the gamma subunits CACNG4, CACNG6, CACNG7 and CACNG8. Interacts with CACNB1. Interacts with CACNB2. Identified in a complex with CACNA2D4 and CACNB3. Interacts with CACNB3. Interacts with CACNA2D1. Interacts with CACNA2D4. Interacts with CALM1. Interacts (via the N-terminus and the C-terminal C and IQ motifs) with CABP1; this inhibits Ca(2+)-dependent channel inactivation. The binding via the C motif is calcium independent whereas the binding via IQ requires the presence of calcium and is mutually exclusive with calmodulin binding. The binding to the cytoplasmic N-terminal domain is calcium independent but is essential for the channel modulation. Interacts (via C-terminal CDB motif) with CABP5; in a calcium-dependent manner. Interacts with CIB1; the interaction increases upon cardiomyocytes hypertrophy. Interacts with STAC2 and STAC3; this inhibits channel inactivation. Phosphorylation by PKA at Ser-1897 activates the channel. Elevated levels of blood glucose lead to increased phosphorylation by PKA. As to expression, detected in embryonic heart. Detected in retina in rod bipolar cells. Detected in tibialis artery (at protein level). Detected in smooth muscle cells from tibialis artery and in mesenteric artery. High expression in heart, followed by brain and spinal cord.

The protein localises to the cell membrane. It localises to the sarcolemma. It is found in the perikaryon. Its subcellular location is the postsynaptic density membrane. The protein resides in the cell projection. The protein localises to the dendrite. It localises to the T-tubule. It carries out the reaction Ca(2+)(in) = Ca(2+)(out). Inhibited by dihydropyridines (DHP), such as isradipine. Inhibited by nifedipine. Channel activity is regulated by Ca(2+) and calmodulin. Binding of STAC1, STAC2 or STAC3 to a region that overlaps with the calmodulin binding site inhibits channel inactivation by Ca(2+) and calmodulin. Binding of calmodulin or CABP1 at the same regulatory sites results in opposite effects on the channel function. Shear stress and pressure increases calcium channel activity. In terms of biological role, pore-forming, alpha-1C subunit of the voltage-gated calcium channel that gives rise to L-type calcium currents. Mediates influx of calcium ions into the cytoplasm, and thereby triggers calcium release from the sarcoplasm. Plays an important role in excitation-contraction coupling in the heart. Required for normal heart development and normal regulation of heart rhythm. Required for normal contraction of smooth muscle cells in blood vessels and in the intestine. Essential for normal blood pressure regulation via its role in the contraction of arterial smooth muscle cells. Long-lasting (L-type) calcium channels belong to the 'high-voltage activated' (HVA) group. This is Voltage-dependent L-type calcium channel subunit alpha-1C (Cacna1c) from Mus musculus (Mouse).